We begin with the raw amino-acid sequence, 439 residues long: Alpha-1,3-mannosyl-glycoprotein 4-beta-N-acetylglucosaminyltransferase-like protein MGAT4E (439 aa).

Its pathway is protein modification; protein glycosylation. In terms of biological role, glycosyltransferase-like protein that may participate in the transfer of N-acetylglucosamine (GlcNAc) to the core mannose residues of N-linked glycans. This is Alpha-1,3-mannosyl-glycoprotein 4-beta-N-acetylglucosaminyltransferase-like protein MGAT4E from Mus musculus (Mouse).